We begin with the raw amino-acid sequence, 343 residues long: Holliday junction branch migration complex subunit RuvB (343 aa).

The segment at 1-185 is large ATPase domain (RuvB-L); it reads MMNENLDATG…FGISSRLQYY (185 aa). ATP is bound by residues Leu-24, Arg-25, Gly-66, Lys-69, Thr-70, Thr-71, 132-134, Arg-175, Tyr-185, and Arg-222; that span reads EDY. Residue Thr-70 participates in Mg(2+) binding. The segment at 186–256 is small ATPAse domain (RuvB-S); that stretch reads STELLSGIVE…IAKFGLKALN (71 aa). The tract at residues 259–343 is head domain (RuvB-H); sequence AHGLDEMDNK…GSNQGGLFDN (85 aa). DNA contacts are provided by Arg-314 and Arg-319.

This sequence belongs to the RuvB family. In terms of assembly, homohexamer. Forms an RuvA(8)-RuvB(12)-Holliday junction (HJ) complex. HJ DNA is sandwiched between 2 RuvA tetramers; dsDNA enters through RuvA and exits via RuvB. An RuvB hexamer assembles on each DNA strand where it exits the tetramer. Each RuvB hexamer is contacted by two RuvA subunits (via domain III) on 2 adjacent RuvB subunits; this complex drives branch migration. In the full resolvosome a probable DNA-RuvA(4)-RuvB(12)-RuvC(2) complex forms which resolves the HJ.

It is found in the cytoplasm. The catalysed reaction is ATP + H2O = ADP + phosphate + H(+). Functionally, the RuvA-RuvB-RuvC complex processes Holliday junction (HJ) DNA during genetic recombination and DNA repair, while the RuvA-RuvB complex plays an important role in the rescue of blocked DNA replication forks via replication fork reversal (RFR). RuvA specifically binds to HJ cruciform DNA, conferring on it an open structure. The RuvB hexamer acts as an ATP-dependent pump, pulling dsDNA into and through the RuvAB complex. RuvB forms 2 homohexamers on either side of HJ DNA bound by 1 or 2 RuvA tetramers; 4 subunits per hexamer contact DNA at a time. Coordinated motions by a converter formed by DNA-disengaged RuvB subunits stimulates ATP hydrolysis and nucleotide exchange. Immobilization of the converter enables RuvB to convert the ATP-contained energy into a lever motion, pulling 2 nucleotides of DNA out of the RuvA tetramer per ATP hydrolyzed, thus driving DNA branch migration. The RuvB motors rotate together with the DNA substrate, which together with the progressing nucleotide cycle form the mechanistic basis for DNA recombination by continuous HJ branch migration. Branch migration allows RuvC to scan DNA until it finds its consensus sequence, where it cleaves and resolves cruciform DNA. This is Holliday junction branch migration complex subunit RuvB from Christiangramia forsetii (strain DSM 17595 / CGMCC 1.15422 / KT0803) (Gramella forsetii).